The following is a 399-amino-acid chain: Paraneoplastic antigen-like protein 6A (399 aa).

Belongs to the PNMA family. As to expression, expressed in the brain.

The protein is Paraneoplastic antigen-like protein 6A of Homo sapiens (Human).